The primary structure comprises 64 residues: Sperm protamine P1 (64 aa).

The segment at 1-64 (MARYRHSRSR…SRRRRRRYYY (64 aa)) is disordered.

The protein belongs to the protamine P1 family. As to expression, testis.

It localises to the nucleus. Its subcellular location is the chromosome. Protamines substitute for histones in the chromatin of sperm during the haploid phase of spermatogenesis. They compact sperm DNA into a highly condensed, stable and inactive complex. The chain is Sperm protamine P1 (PRM1) from Hypsiprymnodon moschatus (Musky rat kangaroo).